We begin with the raw amino-acid sequence, 437 residues long: Trigger factor (437 aa).

Residues 163–248 (SDRVIIDFEG…LNNVSEATLP (86 aa)) form the PPIase FKBP-type domain.

It belongs to the FKBP-type PPIase family. Tig subfamily.

The protein resides in the cytoplasm. The enzyme catalyses [protein]-peptidylproline (omega=180) = [protein]-peptidylproline (omega=0). Its function is as follows. Involved in protein export. Acts as a chaperone by maintaining the newly synthesized protein in an open conformation. Functions as a peptidyl-prolyl cis-trans isomerase. This is Trigger factor from Neisseria meningitidis serogroup C / serotype 2a (strain ATCC 700532 / DSM 15464 / FAM18).